The sequence spans 77 residues: Small ribosomal subunit protein bS18 (77 aa).

This sequence belongs to the bacterial ribosomal protein bS18 family. As to quaternary structure, part of the 30S ribosomal subunit. Forms a tight heterodimer with protein bS6.

Binds as a heterodimer with protein bS6 to the central domain of the 16S rRNA, where it helps stabilize the platform of the 30S subunit. The polypeptide is Small ribosomal subunit protein bS18 (Bacillus thuringiensis subsp. konkukian (strain 97-27)).